The primary structure comprises 546 residues: Chaperonin GroEL (546 aa).

ATP contacts are provided by residues 30–33 (TLGP), K51, 87–91 (DGTTT), G415, 479–481 (NAA), and D495. The interval 527–546 (DESAAPAMPGGMGGMGDMGM) is disordered. The span at 536–546 (GGMGGMGDMGM) shows a compositional bias: gly residues.

This sequence belongs to the chaperonin (HSP60) family. In terms of assembly, forms a cylinder of 14 subunits composed of two heptameric rings stacked back-to-back. Interacts with the co-chaperonin GroES.

It is found in the cytoplasm. It carries out the reaction ATP + H2O + a folded polypeptide = ADP + phosphate + an unfolded polypeptide.. In terms of biological role, together with its co-chaperonin GroES, plays an essential role in assisting protein folding. The GroEL-GroES system forms a nano-cage that allows encapsulation of the non-native substrate proteins and provides a physical environment optimized to promote and accelerate protein folding. The protein is Chaperonin GroEL of Acidovorax sp. (strain JS42).